A 190-amino-acid chain; its full sequence is Protein GrpE (190 aa).

The segment covering 1-18 (MTETPNTSSEEIQTSEPS) has biased composition (polar residues). A disordered region spans residues 1-21 (MTETPNTSSEEIQTSEPSPDN).

Belongs to the GrpE family. In terms of assembly, homodimer.

The protein localises to the cytoplasm. Functionally, participates actively in the response to hyperosmotic and heat shock by preventing the aggregation of stress-denatured proteins, in association with DnaK and GrpE. It is the nucleotide exchange factor for DnaK and may function as a thermosensor. Unfolded proteins bind initially to DnaJ; upon interaction with the DnaJ-bound protein, DnaK hydrolyzes its bound ATP, resulting in the formation of a stable complex. GrpE releases ADP from DnaK; ATP binding to DnaK triggers the release of the substrate protein, thus completing the reaction cycle. Several rounds of ATP-dependent interactions between DnaJ, DnaK and GrpE are required for fully efficient folding. This chain is Protein GrpE, found in Chlamydia trachomatis serovar L2b (strain UCH-1/proctitis).